The primary structure comprises 1130 residues: MHC class II transactivator (1130 aa).

Positions 94–132 (AYANIAELDQYVFQDSQLEGLSKDIFKHIGPDEVIGESM) are required for acetyltransferase activity. A disordered region spans residues 269-303 (PSGFTVHGLPTSPDRPGSTSPFAPSATDLPSMPEP). The region spanning 414–724 (RVIAVLGKAG…CFLGALWLAL (311 aa)) is the NACHT domain. GTP is bound at residue 420-427 (GKAGQGKS). LRR repeat units follow at residues 985-1008 (SLQH…SQLS), 1016-1037 (SLET…KLAE), 1045-1066 (SLLR…SLAR), and 1073-1093 (SLRV…QQLA).

In terms of assembly, interacts with ZXDA and ZXDC. Interacts with PML (isoform PML-2). Interacts with TAF7; interaction inhibits CIITA acetyltransferase activity, thereby repressing transcription. Post-translationally, autophosphorylated, affecting interaction with TAF7.

It localises to the nucleus. The protein resides in the PML body. It catalyses the reaction L-seryl-[protein] + ATP = O-phospho-L-seryl-[protein] + ADP + H(+). The catalysed reaction is L-threonyl-[protein] + ATP = O-phospho-L-threonyl-[protein] + ADP + H(+). In terms of biological role, essential for transcriptional activity of the HLA class II promoter; activation is via the proximal promoter. Does not bind DNA. May act in a coactivator-like fashion through protein-protein interactions by contacting factors binding to the proximal MHC class II promoter, to elements of the transcription machinery, or both PubMed:8402893, PubMed:7749984,. Alternatively it may activate HLA class II transcription by modifying proteins that bind to the MHC class II promoter. Also mediates enhanced MHC class I transcription; the promoter element requirements for CIITA-mediated transcription are distinct from those of constitutive MHC class I transcription, and CIITA can functionally replace TAF1 at these genes. Activates CD74 transcription. Exhibits intrinsic GTP-stimulated acetyltransferase activity. Exhibits serine/threonine protein kinase activity: can phosphorylate the TFIID component TAF7, the RAP74 subunit of the general transcription factor TFIIF, histone H2B at 'Ser-37' and other histones (in vitro). Has antiviral activity against Ebola virus and coronaviruses, including SARS-CoV-2. Induces resistance by up-regulation of the p41 isoform of CD74, which blocks cathepsin-mediated cleavage of viral glycoproteins, thereby preventing viral fusion. Its function is as follows. Exhibits dominant-negative suppression of MHC class II gene expression. In Homo sapiens (Human), this protein is MHC class II transactivator.